A 715-amino-acid chain; its full sequence is MIYEGKAITVKALESGIVELKFDLKGESVNKFNRLTLNELRQAVEAIQADASVKGVIVSSGKDVFIVGADITEFVDNFKLPEAELVAGNLEANRIFNAFEDLEVPTVAAINGIALGGGLEMCLAADYRVMSNSAKIGLPEVKLGIYPGFGGTVRLPRLIGSDNAIEWIAAGKENRAEDALKVGAVDAVVAPELLLAGALDLIKRAISGELDYKAKRQPKLEKLKLNAIEQMMAFETAKGFVAGQAGPNYPAPVEAIKSIQKAANFGRDKALEVEAAGFAKLAKTSVAESLIGLFLNDQELKRKAKAHDEIAHDVKQAAVLGAGIMGGGIAYQSAVKGTPILMKDIREEAIQLGLNEASKLLGNRVEKGRLTPAKMAEALNAIRPTLSYGDFANVDIVVEAVVENPKVKQAVLAEVEGQVKDDAILASNTSTISINLLAKALKRPENFVGMHFFNPVHMMPLVEVIRGEKSSEVAVATTVAYAKKMGKNPIVVNDCPGFLVNRVLFPYFGGFAKLVSAGVDFVRIDKVMEKFGWPMGPAYLMDVVGIDTGHHGRDVMAEGFPDRMKDERRSAVDALYEANRLGQKNGKGFYAYETDKRGKPKKVFDATVLDVLKPIVFEQREVTDEDIINWMMVPLCLETVRCLEDGIVETAAEADMGLVYGIGFPPFRGGALRYIDSIGVAEFVALADQYADLGPLYHPTAKLREMAKNGQRFFN.

The tract at residues 1-190 (MIYEGKAITV…KVGAVDAVVA (190 aa)) is enoyl-CoA hydratase/isomerase. D297 serves as a coordination point for substrate. Residues 312–715 (HDVKQAAVLG…MAKNGQRFFN (404 aa)) form a 3-hydroxyacyl-CoA dehydrogenase region. NAD(+) is bound by residues M325, D344, 401–403 (VVE), K408, and S430. H451 (for 3-hydroxyacyl-CoA dehydrogenase activity) is an active-site residue. N454 provides a ligand contact to NAD(+). The substrate site is built by N501 and Y660.

In the N-terminal section; belongs to the enoyl-CoA hydratase/isomerase family. This sequence in the C-terminal section; belongs to the 3-hydroxyacyl-CoA dehydrogenase family. Heterotetramer of two alpha chains (FadB) and two beta chains (FadA).

It carries out the reaction a (3S)-3-hydroxyacyl-CoA + NAD(+) = a 3-oxoacyl-CoA + NADH + H(+). The enzyme catalyses a (3S)-3-hydroxyacyl-CoA = a (2E)-enoyl-CoA + H2O. The catalysed reaction is a 4-saturated-(3S)-3-hydroxyacyl-CoA = a (3E)-enoyl-CoA + H2O. It catalyses the reaction (3S)-3-hydroxybutanoyl-CoA = (3R)-3-hydroxybutanoyl-CoA. It carries out the reaction a (3Z)-enoyl-CoA = a 4-saturated (2E)-enoyl-CoA. The enzyme catalyses a (3E)-enoyl-CoA = a 4-saturated (2E)-enoyl-CoA. The protein operates within lipid metabolism; fatty acid beta-oxidation. Involved in the aerobic and anaerobic degradation of long-chain fatty acids via beta-oxidation cycle. Catalyzes the formation of 3-oxoacyl-CoA from enoyl-CoA via L-3-hydroxyacyl-CoA. It can also use D-3-hydroxyacyl-CoA and cis-3-enoyl-CoA as substrate. In Pseudomonas putida (strain GB-1), this protein is Fatty acid oxidation complex subunit alpha.